The primary structure comprises 443 residues: BBSome complex member BBS5 homolog (443 aa).

It belongs to the BBS5 family.

Its subcellular location is the cytoplasm. The protein localises to the cytoskeleton. It is found in the flagellum axoneme. The polypeptide is BBSome complex member BBS5 homolog (Giardia intestinalis (strain ATCC 50803 / WB clone C6) (Giardia lamblia)).